We begin with the raw amino-acid sequence, 114 residues long: uncharacterized protein (114 aa).

A helical transmembrane segment spans residues 7 to 27; it reads YIFSFWFFFLVEYVVTFRLFL. The disordered stretch occupies residues 90–114; the sequence is KNSPEKKKFKRGLPISSKYTDGKKR.

The protein localises to the membrane. This is an uncharacterized protein from Saccharomyces cerevisiae (strain ATCC 204508 / S288c) (Baker's yeast).